Here is a 248-residue protein sequence, read N- to C-terminus: Adenylate kinase isoenzyme 6 homolog HBR1 (248 aa).

The ATP site is built by Gly19, Gly21, Lys22, Ser23, and Ser24. The tract at residues 49 to 72 is NMPbind; the sequence is NISEIAKERDCIESYDAKLDTSIV. The segment at 124–134 is LID; that stretch reads TRNYNDLKLQE. Arg125 contacts ATP. A disordered region spans residues 188-248; sequence DGVSNELNKQ…EMEHTEDIAQ (61 aa). Over residues 202–238 the composition is skewed to acidic residues; that stretch reads DSSDEGDDNSDSDEYELEEDEQEEEEEREEYDEETNE. The segment covering 239-248 has biased composition (basic and acidic residues); that stretch reads EMEHTEDIAQ.

This sequence belongs to the adenylate kinase family. AK6 subfamily. In terms of assembly, interacts with small ribosomal subunit protein uS11. Not a structural component of 43S pre-ribosomes, but transiently interacts with them by binding to uS11.

The protein resides in the cytoplasm. The protein localises to the nucleus. It catalyses the reaction AMP + ATP = 2 ADP. The enzyme catalyses ATP + H2O = ADP + phosphate + H(+). Its function is as follows. Broad-specificity nucleoside monophosphate (NMP) kinase that catalyzes the reversible transfer of the terminal phosphate group between nucleoside triphosphates and monophosphates. Also has ATPase activity. Involved in the late cytoplasmic maturation steps of the 40S ribosomal particles, specifically 18S rRNA maturation. While NMP activity is not required for ribosome maturation, ATPase activity is. Associates transiently with small ribosomal subunit protein uS11. ATP hydrolysis breaks the interaction with uS11. May temporarily remove uS11 from the ribosome to enable a conformational change of the ribosomal RNA that is needed for the final maturation step of the small ribosomal subunit. Its NMP activity may have a role in nuclear energy homeostasis. Induces transcription of mating-type proteins ALPHA1 and ALPHA2 and moderately represses transcription of mating-type protein A1 in response to hemoglobin and growth signals. Involved in the induction of a high affinity fibronectin receptor by sub-inhibitory dosages of caspofungin. The polypeptide is Adenylate kinase isoenzyme 6 homolog HBR1 (HBR1) (Candida albicans (strain SC5314 / ATCC MYA-2876) (Yeast)).